Here is a 414-residue protein sequence, read N- to C-terminus: Esterase FrsA (414 aa).

The protein belongs to the FrsA family.

It carries out the reaction a carboxylic ester + H2O = an alcohol + a carboxylate + H(+). Catalyzes the hydrolysis of esters. This Klebsiella pneumoniae subsp. pneumoniae (strain ATCC 700721 / MGH 78578) protein is Esterase FrsA.